Here is a 76-residue protein sequence, read N- to C-terminus: Theta defensin subunit B (76 aa).

Positions 1–22 (MRTFALLTAMLLLVALQPQAEA) are cleaved as a signal peptide. Residues 23–64 (RQARADEAAAQQQPGADDQGMAHSFTRPENAALPLSESAKGL) constitute a propeptide that is removed on maturation. Residues 24–54 (QARADEAAAQQQPGADDQGMAHSFTRPENAA) are disordered. The segment covering 30 to 44 (AAAQQQPGADDQGMA) has biased composition (low complexity). Arginine 65 is covalently cross-linked (Cyclopeptide (Arg-Cys) (interchain with C-73 in subunit A); in form BTD-1). Arginine 65 is covalently cross-linked (Cyclopeptide (Arg-Cys) (interchain with C-73 in subunit B); in form BTD-2). Cysteine 68 and cysteine 73 are disulfide-bonded. Cysteine 73 is covalently cross-linked (Cyclopeptide (Cys-Arg) (interchain with R-65 in subunit A); in form BTD-1). A Cyclopeptide (Cys-Arg) (interchain with R-65 in subunit B); in form BTD-2 cross-link involves residue cysteine 73. Positions 74–76 (QLL) are excised as a propeptide.

This sequence belongs to the alpha-defensin family. Theta subfamily. As to quaternary structure, BTD-1 is a cyclic heterodimer composed of subunits A and B; disulfide-linked. BTD-2 is a cyclic homodimer composed of two subunits B; disulfide-linked. Post-translationally, forms a cyclic peptide with subunit A (BTD-1), or subunit B (BTD-2). An additional intersubunit disulfide bond is formed.

Functionally, BTD-1 and BTD-2 have antimicrobial activity against the Gram-negative bacterium E.coli ML35, the Gram-positive bacterium S.aureus 502a, and the fungus C.albicans 16820. BTD-2 is more effective against E.coli than BTD-1. In Papio anubis (Olive baboon), this protein is Theta defensin subunit B (BTDB).